The sequence spans 185 residues: Translation initiation factor IF-3 (185 aa).

This sequence belongs to the IF-3 family. Monomer.

It localises to the cytoplasm. Its function is as follows. IF-3 binds to the 30S ribosomal subunit and shifts the equilibrium between 70S ribosomes and their 50S and 30S subunits in favor of the free subunits, thus enhancing the availability of 30S subunits on which protein synthesis initiation begins. In Rickettsia typhi (strain ATCC VR-144 / Wilmington), this protein is Translation initiation factor IF-3.